The primary structure comprises 359 residues: Peroxisome assembly protein 12 (359 aa).

Over 1-24 the chain is Peroxisomal matrix; the sequence is MSTTIRASQLASSISPKTEEKQPS. A helical transmembrane segment spans residues 25–52; sequence VFDIIAQENLATSIRPALQHLVKYLAFF. Residues 53-56 are Cytoplasmic-facing; it reads KPKT. Residues 57-81 form a helical membrane-spanning segment; sequence FLSVHRNFDEYYIIFDLILQNHYLR. Topologically, residues 82 to 106 are peroxisomal matrix; it reads NYGASFTENFYSMKRIASGTGNPPN. The helical transmembrane segment at 107 to 128 threads the bilayer; it reads DGRERIMSLITLVGWPYVENKL. The Cytoplasmic segment spans residues 129 to 133; it reads NQLYD. Residues 134-184 form a helical membrane-spanning segment; sequence RLKEVYECRSWSSINGMKAKCQKMFVIIWPYIKTALKAVKSALQLAYILNR. The Peroxisomal matrix portion of the chain corresponds to 185–253; the sequence is SSIHSPWLYF…ILGLPGIVSR (69 aa). A helical transmembrane segment spans residues 254-281; that stretch reads LFAYGLFFVQFLDYMYNTDLAKLTKTGL. Residues 282-359 lie on the Cytoplasmic side of the membrane; sequence DGAIPSPPHK…NVQHLIRLFV (78 aa). 4 residues coordinate Zn(2+): Cys307, Cys310, Cys328, and Cys331. The RING-type; degenerate zinc-finger motif lies at 307-346; that stretch reads CPICLKKRVNDTALFVSGYVFCYTCINQYVNTYNKCPVTG.

This sequence belongs to the pex2/pex10/pex12 family. In terms of assembly, component of the PEX2-PEX10-PEX12 retrotranslocation channel.

The protein resides in the peroxisome membrane. It participates in protein modification; protein ubiquitination. Functionally, component of a retrotranslocation channel required for peroxisome organization by mediating export of the PEX5/prx-5 receptor from peroxisomes to the cytosol, thereby promoting PEX5/prx-5 recycling. The retrotranslocation channel is composed of PEX2/prx-2, PEX10/prx-10 and PEX12/prx-12; each subunit contributing transmembrane segments that coassemble into an open channel that specifically allows the passage of PEX5/prx-5 through the peroxisomal membrane. PEX12/prx-12 also regulates PEX5/prx-5 recycling by activating the E3 ubiquitin-protein ligase activity of PEX10/prx-10. When PEX5 recycling is compromised, PEX12/prx-12 stimulates PEX10-mediated polyubiquitination of PEX5/prx-5, leading to its subsequent degradation. This chain is Peroxisome assembly protein 12 (prx-12), found in Caenorhabditis elegans.